Reading from the N-terminus, the 552-residue chain is Hyaluronan synthase 2 (552 aa).

At 1–11 (MHCERFLCVLR) the chain is on the cytoplasmic side. A helical membrane pass occupies residues 12–32 (IIGTTLFGVSLLLGITAAYIV). At 33-45 (GYQFIQTDNYYFS) the chain is on the extracellular side. A helical membrane pass occupies residues 46 to 66 (FGLYGAFLASHLIIQSLFAFL). Residues 67 to 374 (EHRKMKKSLE…NAMWFHKHHL (308 aa)) lie on the Cytoplasmic side of the membrane. Residue Thr110 is modified to Phosphothreonine. Residue Lys190 forms a Glycyl lysine isopeptide (Lys-Gly) (interchain with G-Cter in ubiquitin) linkage. O-linked (GlcNAc) serine glycosylation is present at Ser221. Thr328 carries the post-translational modification Phosphothreonine. Residues 375–395 (WMTYEAVITGFFPFFLIATVI) form a helical membrane-spanning segment. The Extracellular portion of the chain corresponds to 396–402 (QLFYRGK). The chain crosses the membrane as a helical span at residues 403-423 (IWNILLFLLTVQLVGLIKSSF). Residues 424–429 (ASCLRG) lie on the Cytoplasmic side of the membrane. A helical transmembrane segment spans residues 430-450 (NIVMVFMSLYSVLYMSSLLPA). Residues 451–475 (KMFAIATINKAGWGTSGRKTIVVNF) lie on the Extracellular side of the membrane. A helical transmembrane segment spans residues 476–496 (IGLIPVSVWFTILLGGVIFTI). Over 497–510 (YKESKKPFSESKQT) the chain is Cytoplasmic. The chain crosses the membrane as a helical span at residues 511–531 (VLIVGTLIYACYWVVLLTLYV). Over 532-552 (VLINKCGRRKKGQQYDMVLDV) the chain is Extracellular.

The protein belongs to the NodC/HAS family. In terms of assembly, homodimer; dimerization promotes enzymatic activity. Forms heterodimer with HAS3. Forms heterodimer with HAS1. The cofactor is Mg(2+). Post-translationally, phosphorylation at Thr-328 is essential for hyaluronan synthase activity. In terms of processing, O-GlcNAcylation at Ser-221 increases the stability of HAS2 and plasma membrane localization. Ubiquitination at Lys-190; this ubiquitination is essential for hyaluronan synthase activity and homo- or hetero-oligomerization. Can also be poly-ubiquitinated. Deubiquitinated by USP17L22/USP17 and USP4. USP17L22/USP17 efficiently removes 'Lys-63'- and 'Lys-48'-linked polyubiquitin chains, whereas USP4 preferentially removes monoubiquitination and, partially, both 'Lys-63'- and 'Lys-48'-linked polyubiquitin chain.

The protein resides in the cell membrane. It is found in the endoplasmic reticulum membrane. Its subcellular location is the vesicle. The protein localises to the golgi apparatus membrane. It localises to the lysosome. The enzyme catalyses [hyaluronan](n) + UDP-N-acetyl-alpha-D-glucosamine = N-acetyl-beta-D-glucosaminyl-(1-&gt;4)-[hyaluronan](n) + UDP + H(+). It carries out the reaction N-acetyl-beta-D-glucosaminyl-(1-&gt;4)-[hyaluronan](n) + UDP-alpha-D-glucuronate = [hyaluronan](n+1) + UDP + H(+). Its pathway is glycan biosynthesis; hyaluronan biosynthesis. Functionally, catalyzes the addition of GlcNAc or GlcUA monosaccharides to the nascent hyaluronan polymer. Therefore, it is essential to hyaluronan synthesis a major component of most extracellular matrices that has a structural role in tissues architectures and regulates cell adhesion, migration and differentiation. This is one of three isoenzymes responsible for cellular hyaluronan synthesis and it is particularly responsible for the synthesis of high molecular mass hyaluronan. The polypeptide is Hyaluronan synthase 2 (Has2) (Rattus norvegicus (Rat)).